The following is a 690-amino-acid chain: DNA ligase (690 aa).

NAD(+) is bound by residues D49–D53, S98–L99, and E129. Residue K131 is the N6-AMP-lysine intermediate of the active site. NAD(+)-binding residues include R152, E191, K308, and K332. 4 residues coordinate Zn(2+): C426, C429, C444, and C450. One can recognise a BRCT domain in the interval E607 to A690.

The protein belongs to the NAD-dependent DNA ligase family. LigA subfamily. The cofactor is Mg(2+). Requires Mn(2+) as cofactor.

The enzyme catalyses NAD(+) + (deoxyribonucleotide)n-3'-hydroxyl + 5'-phospho-(deoxyribonucleotide)m = (deoxyribonucleotide)n+m + AMP + beta-nicotinamide D-nucleotide.. In terms of biological role, DNA ligase that catalyzes the formation of phosphodiester linkages between 5'-phosphoryl and 3'-hydroxyl groups in double-stranded DNA using NAD as a coenzyme and as the energy source for the reaction. It is essential for DNA replication and repair of damaged DNA. In Salinibacter ruber (strain DSM 13855 / M31), this protein is DNA ligase.